The primary structure comprises 438 residues: UDP-N-acetylmuramoylalanine--D-glutamate ligase (438 aa).

Position 112 to 118 (112 to 118) interacts with ATP; sequence GSNGKST.

This sequence belongs to the MurCDEF family.

Its subcellular location is the cytoplasm. The catalysed reaction is UDP-N-acetyl-alpha-D-muramoyl-L-alanine + D-glutamate + ATP = UDP-N-acetyl-alpha-D-muramoyl-L-alanyl-D-glutamate + ADP + phosphate + H(+). It participates in cell wall biogenesis; peptidoglycan biosynthesis. In terms of biological role, cell wall formation. Catalyzes the addition of glutamate to the nucleotide precursor UDP-N-acetylmuramoyl-L-alanine (UMA). The polypeptide is UDP-N-acetylmuramoylalanine--D-glutamate ligase (murD) (Escherichia coli O6:H1 (strain CFT073 / ATCC 700928 / UPEC)).